We begin with the raw amino-acid sequence, 322 residues long: Malate dehydrogenase (322 aa).

NAD(+) contacts are provided by residues glycine 10–glycine 15 and aspartate 34. Substrate-binding residues include arginine 83 and arginine 89. NAD(+) contacts are provided by residues asparagine 96 and isoleucine 119–asparagine 121. Substrate-binding residues include asparagine 121 and arginine 152. The active-site Proton acceptor is histidine 176.

This sequence belongs to the LDH/MDH superfamily. MDH type 3 family.

The catalysed reaction is (S)-malate + NAD(+) = oxaloacetate + NADH + H(+). In terms of biological role, catalyzes the reversible oxidation of malate to oxaloacetate. The polypeptide is Malate dehydrogenase (Bradyrhizobium diazoefficiens (strain JCM 10833 / BCRC 13528 / IAM 13628 / NBRC 14792 / USDA 110)).